The primary structure comprises 47 residues: Large ribosomal subunit protein bL34 (47 aa).

This sequence belongs to the bacterial ribosomal protein bL34 family.

The sequence is that of Large ribosomal subunit protein bL34 from Corynebacterium glutamicum (strain R).